Reading from the N-terminus, the 182-residue chain is Dual-action ribosomal maturation protein DarP (182 aa).

The tract at residues 1 to 25 is disordered; that stretch reads MEENLADNSEREARPSKTKRKKEMH.

It belongs to the DarP family.

The protein resides in the cytoplasm. Its function is as follows. Member of a network of 50S ribosomal subunit biogenesis factors which assembles along the 30S-50S interface, preventing incorrect 23S rRNA structures from forming. Promotes peptidyl transferase center (PTC) maturation. The sequence is that of Dual-action ribosomal maturation protein DarP from Nitrosospira multiformis (strain ATCC 25196 / NCIMB 11849 / C 71).